Consider the following 473-residue polypeptide: MKILYSLRRFYHVETLFNGTFVLAGRDQETTGFAWWAGNARLINLSGKLLGAHVAHAGLIVFWAGAMNLFEVAHFVPEKPMYEQGLILLPHLATLGWGVGPGGEVLDTFPYFVSGVLHLISSAVLGFGGIYHALLGPETLEESFPFFGYVWKDRNKMTTILGIHLILLGLGAFLLVLKALYFGGVYDTWAPGGGDVRKITNLTLSPGVIFGYLLKSPFGGEGWIVSVDDLEDIIGGHVWLGFICVFGGIWHILTKPFAWARRAFVWSGEAYLSYSLAALSVFGFIACCFVWFNNTAYPSEFYGPTGPEASQAQAFTFLVRDQRLGANVGSAQGPTGLGKYLMRSPTGEVIFGGETMRFWDLRAPWLEPLRGPNGLDLSRLKKDIQPWQERRSAEYMTHAPLGSLNSVGGVATEINAVNYVSPRSWLSTSHFVLGFFFFVGHLWHAGRARAAAAGFEKGIDRDLEPVLYMNPLN.

Residues 1-14 (MKILYSLRRFYHVE) constitute a propeptide that is removed on maturation. Thr-15 is subject to N-acetylthreonine. Thr-15 carries the post-translational modification Phosphothreonine. A run of 5 helical transmembrane segments spans residues 69–93 (LFEVAHFVPEKPMYEQGLILLPHLA), 134–155 (LLGPETLEESFPFFGYVWKDRN), 178–200 (KALYFGGVYDTWAPGGGDVRKIT), 255–275 (KPFAWARRAFVWSGEAYLSYS), and 291–312 (WFNNTAYPSEFYGPTGPEASQA). Glu-367 contacts [CaMn4O5] cluster. A helical membrane pass occupies residues 447–471 (RARAAAAGFEKGIDRDLEPVLYMNP).

This sequence belongs to the PsbB/PsbC family. PsbC subfamily. In terms of assembly, PSII is composed of 1 copy each of membrane proteins PsbA, PsbB, PsbC, PsbD, PsbE, PsbF, PsbH, PsbI, PsbJ, PsbK, PsbL, PsbM, PsbT, PsbX, PsbY, PsbZ, Psb30/Ycf12, at least 3 peripheral proteins of the oxygen-evolving complex and a large number of cofactors. It forms dimeric complexes. The cofactor is Binds multiple chlorophylls and provides some of the ligands for the Ca-4Mn-5O cluster of the oxygen-evolving complex. It may also provide a ligand for a Cl- that is required for oxygen evolution. PSII binds additional chlorophylls, carotenoids and specific lipids..

Its subcellular location is the plastid. It is found in the chloroplast thylakoid membrane. One of the components of the core complex of photosystem II (PSII). It binds chlorophyll and helps catalyze the primary light-induced photochemical processes of PSII. PSII is a light-driven water:plastoquinone oxidoreductase, using light energy to abstract electrons from H(2)O, generating O(2) and a proton gradient subsequently used for ATP formation. This chain is Photosystem II CP43 reaction center protein, found in Brachypodium distachyon (Purple false brome).